The chain runs to 161 residues: 2-C-methyl-D-erythritol 2,4-cyclodiphosphate synthase (161 aa).

Residues Asp-10 and His-12 each contribute to the a divalent metal cation site. 4-CDP-2-C-methyl-D-erythritol 2-phosphate-binding positions include 10 to 12 and 36 to 37; these read DVH and HS. His-44 contributes to the a divalent metal cation binding site. Residues 58–60, 63–67, 134–137, Phe-141, and Arg-144 each bind 4-CDP-2-C-methyl-D-erythritol 2-phosphate; these read DIG, FPDTD, and TTTE.

The protein belongs to the IspF family. In terms of assembly, homotrimer. A divalent metal cation is required as a cofactor.

It carries out the reaction 4-CDP-2-C-methyl-D-erythritol 2-phosphate = 2-C-methyl-D-erythritol 2,4-cyclic diphosphate + CMP. Its pathway is isoprenoid biosynthesis; isopentenyl diphosphate biosynthesis via DXP pathway; isopentenyl diphosphate from 1-deoxy-D-xylulose 5-phosphate: step 4/6. Its function is as follows. Involved in the biosynthesis of isopentenyl diphosphate (IPP) and dimethylallyl diphosphate (DMAPP), two major building blocks of isoprenoid compounds. Catalyzes the conversion of 4-diphosphocytidyl-2-C-methyl-D-erythritol 2-phosphate (CDP-ME2P) to 2-C-methyl-D-erythritol 2,4-cyclodiphosphate (ME-CPP) with a corresponding release of cytidine 5-monophosphate (CMP). This is 2-C-methyl-D-erythritol 2,4-cyclodiphosphate synthase from Shewanella putrefaciens (strain CN-32 / ATCC BAA-453).